A 915-amino-acid chain; its full sequence is Probable dipeptidyl-aminopeptidase B (915 aa).

Residues 1 to 82 (MAPPFTDDPE…GAFLGPPGVP (82 aa)) form a disordered region. The Cytoplasmic segment spans residues 1–94 (MAPPFTDDPE…RQPMDRGFRR (94 aa)). The segment covering 15 to 32 (STSRLSQDSLSSVSTTSL) has biased composition (low complexity). Positions 36-62 (RIQEEMDRDPSASRSARRDLLPATKDE) are enriched in basic and acidic residues. The helical; Signal-anchor for type II membrane protein transmembrane segment at 95–115 (ILIIIGAVFVGAWLAGLGIFV) threads the bilayer. Residues 116–915 (LSGSYKHESD…IDTKKRRHVS (800 aa)) are Vacuolar-facing. N-linked (GlcNAc...) asparagine glycans are attached at residues Asn355 and Asn577. Catalysis depends on Ser760, which acts as the Charge relay system. Asn819 is a glycosylation site (N-linked (GlcNAc...) asparagine). Active-site charge relay system residues include Asp837 and His870.

Belongs to the peptidase S9B family.

It is found in the vacuole membrane. The enzyme catalyses Release of an N-terminal dipeptide, Xaa-Yaa-|-Zaa-, from a polypeptide, preferentially when Yaa is Pro, provided Zaa is neither Pro nor hydroxyproline.. Its function is as follows. Type IV dipeptidyl-peptidase which removes N-terminal dipeptides sequentially from polypeptides having unsubstituted N-termini provided that the penultimate residue is proline. In Metarhizium robertsii (strain ARSEF 23 / ATCC MYA-3075) (Metarhizium anisopliae (strain ARSEF 23)), this protein is Probable dipeptidyl-aminopeptidase B (DAPB).